Reading from the N-terminus, the 649-residue chain is Transcription factor tau 95 kDa subunit (649 aa).

A disordered region spans residues 1–21; the sequence is MPVEEPLATLSSIPDSSADQA. Residues 9 to 19 are compositionally biased toward polar residues; the sequence is TLSSIPDSSAD. Residues 221 to 239 form repeat 1; it reads PSTDFQLPPPPKLSMVGFP. The 2 X repeats, Pro-rich stretch occupies residues 221–419; the sequence is PSTDFQLPPP…PPLVFESDTP (199 aa). The Nuclear localization signal signature appears at 296 to 300; sequence AKKTK. The stretch at 400-419 is repeat 2; sequence PIVKKNVPKPPPLVFESDTP. The disordered stretch occupies residues 556 to 612; that stretch reads IAAGDDFDDNGAITEEPDDAALENEEMDTDQNLKVPASIDDDVDDVDADEEEQESFD. Acidic residues-rich tracts occupy residues 560-584 and 594-610; these read DDFDDNGAITEEPDDAALENEEMDT and IDDDVDDVDADEEEQES. At Ser-617 the chain carries Phosphoserine.

It belongs to the TFIIIC subunit 5 family. Component of the TFIIIC complex composed of TFC1, TFC3, TFC4, TFC6, TFC7 and TFC8. The subunits are organized in two globular domains, tauA and tauB, connected by a proteolysis-sensitive and flexible linker. Interacts with TFC3, TFC4 and TFC6.

The protein resides in the nucleus. Its function is as follows. TFIIIC mediates tRNA and 5S RNA gene activation by binding to intragenic promoter elements. Upstream of the transcription start site, TFIIIC assembles the initiation complex TFIIIB-TFIIIC-tDNA, which is sufficient for RNA polymerase III recruitment and function. Part of the tauA domain of TFIIIC that binds boxA DNA promoter sites of tRNA and similar genes. Participates in the interconnection of tauA with tauB via its contacts with TFC3 and TFC6. Serves as a scaffold critical for tauA-DNA spatial configuration and tauB-DNA stability. This Saccharomyces cerevisiae (strain ATCC 204508 / S288c) (Baker's yeast) protein is Transcription factor tau 95 kDa subunit (TFC1).